The following is a 341-amino-acid chain: Alanine racemase (341 aa).

Lys33 acts as the Proton acceptor; specific for D-alanine in catalysis. Lys33 is subject to N6-(pyridoxal phosphate)lysine. Arg126 contacts substrate. Tyr236 serves as the catalytic Proton acceptor; specific for L-alanine. Residue Met284 coordinates substrate.

Belongs to the alanine racemase family. Pyridoxal 5'-phosphate is required as a cofactor.

The catalysed reaction is L-alanine = D-alanine. It functions in the pathway amino-acid biosynthesis; D-alanine biosynthesis; D-alanine from L-alanine: step 1/1. Functionally, catalyzes the interconversion of L-alanine and D-alanine. This chain is Alanine racemase (alr), found in Aquifex pyrophilus.